The sequence spans 643 residues: Cell pattern formation-associated protein asm-1 (643 aa).

The interval 1–37 is disordered; the sequence is MNPNTPADVYYGQMSQGSSMPVTTVPSHSHYASQQPP. Residues 13 to 33 are compositionally biased toward polar residues; sequence QMSQGSSMPVTTVPSHSHYAS. Residues 116–222 form the HTH APSES-type domain; sequence RVTATLWEDE…HNIGALLYHP (107 aa). The H-T-H motif DNA-binding region spans 150–171; sequence GTKLLNVAGMTRGRRDGILKSE. The tract at residues 229-627 is disordered; the sequence is SQVMAAAEQR…GSLPSPTYTA (399 aa). Positions 306–335 are enriched in polar residues; the sequence is DGYQWSQQSMSGTQGNSSLSLDTSLGSNAR. A compositionally biased stretch (low complexity) spans 336 to 349; it reads SMPSTPATTPPGST. Residues 350-367 show a composition bias toward polar residues; the sequence is IQSMQNYPPVSQSYESSR. Positions 368 to 391 are enriched in low complexity; sequence QMYQGQSAQQAQYQSQQHYSSQPQ. Polar residues-rich tracts occupy residues 471–481, 529–551, and 563–577; these read GSYNYNTQAVN, QPSS…TQGN, and SLPN…VMNG. A nuclear localization domain region spans residues 583-612; sequence KRGRDDDDDGGRPTTSAPNLGPGMDMKRRK.

The protein belongs to the EFG1/PHD1/stuA family.

The protein localises to the nucleus. Functionally, transcription factor that regulates asexual reproduction. Binds the StuA-response elements (StRE) with the consensus sequence 5'-(A/T)CGCG(T/A)N(A/C)-3' at the promoters of target genes. Required for rapid conidial germination, normal vegetative morphology, and protoperithecium formation. This is Cell pattern formation-associated protein asm-1 from Neurospora crassa (strain ATCC 24698 / 74-OR23-1A / CBS 708.71 / DSM 1257 / FGSC 987).